Reading from the N-terminus, the 330-residue chain is MDSSFPDWNIEFREQNESYFMESSSCDMSLAMSLLSIIIAIIGLTGNVIVLQLLGFHMHRNAFSVYIFNLSGANFLFLCTHIVFSLENLIRQFHYIDIHMALFSVNVTILAYLAGVSMITAISVEYWLSVLWPTWYHAQRPKHTSTVICTLLWVFSLLLTLWNWIICKVLDYIYNWDMCWKLALIIVVWLLVLFVVLSRSNQALLFRVFCGSQQTPVTRLLVTIMLTALVVLICGFGIGICFFYWKKEENSIMPCGYFYETILLLSGVNSCANPIICLFVGSIKHCQFQCGTLRLILQRAIQESPEEEDEEVEEVVEQEGGEEDEESTTL.

Residues 1 to 33 (MDSSFPDWNIEFREQNESYFMESSSCDMSLAMS) are Extracellular-facing. Residue N16 is glycosylated (N-linked (GlcNAc...) asparagine). The helical transmembrane segment at 34–54 (LLSIIIAIIGLTGNVIVLQLL) threads the bilayer. Over 55-62 (GFHMHRNA) the chain is Cytoplasmic. Residues 63-83 (FSVYIFNLSGANFLFLCTHIV) traverse the membrane as a helical segment. Over 84–101 (FSLENLIRQFHYIDIHMA) the chain is Extracellular. Residues 102–122 (LFSVNVTILAYLAGVSMITAI) form a helical membrane-spanning segment. The Cytoplasmic segment spans residues 123-146 (SVEYWLSVLWPTWYHAQRPKHTST). Residues 147–167 (VICTLLWVFSLLLTLWNWIIC) form a helical membrane-spanning segment. At 168 to 177 (KVLDYIYNWD) the chain is on the extracellular side. A helical membrane pass occupies residues 178–198 (MCWKLALIIVVWLLVLFVVLS). Residues 199–219 (RSNQALLFRVFCGSQQTPVTR) are Cytoplasmic-facing. The helical transmembrane segment at 220–240 (LLVTIMLTALVVLICGFGIGI) threads the bilayer. At 241-260 (CFFYWKKEENSIMPCGYFYE) the chain is on the extracellular side. A helical transmembrane segment spans residues 261–281 (TILLLSGVNSCANPIICLFVG). The Cytoplasmic portion of the chain corresponds to 282–330 (SIKHCQFQCGTLRLILQRAIQESPEEEDEEVEEVVEQEGGEEDEESTTL). Residues 302–330 (QESPEEEDEEVEEVVEQEGGEEDEESTTL) are disordered. Residues 304 to 330 (SPEEEDEEVEEVVEQEGGEEDEESTTL) show a composition bias toward acidic residues.

This sequence belongs to the G-protein coupled receptor 1 family. Mas subfamily.

Its subcellular location is the membrane. Functionally, orphan receptor. Probably involved in the function of nociceptive neurons. May regulate nociceptor function and/or development, including the sensation or modulation of pain. The chain is Mas-related G-protein coupled receptor member B8 (Mrgprb8) from Mus musculus (Mouse).